The following is a 606-amino-acid chain: 4-hydroxy-3-methylbut-2-en-1-yl diphosphate synthase (flavodoxin) (606 aa).

[4Fe-4S] cluster is bound by residues Cys-513, Cys-516, Cys-547, and Glu-554.

Belongs to the IspG family. [4Fe-4S] cluster is required as a cofactor.

The enzyme catalyses (2E)-4-hydroxy-3-methylbut-2-enyl diphosphate + oxidized [flavodoxin] + H2O + 2 H(+) = 2-C-methyl-D-erythritol 2,4-cyclic diphosphate + reduced [flavodoxin]. The protein operates within isoprenoid biosynthesis; isopentenyl diphosphate biosynthesis via DXP pathway; isopentenyl diphosphate from 1-deoxy-D-xylulose 5-phosphate: step 5/6. In terms of biological role, converts 2C-methyl-D-erythritol 2,4-cyclodiphosphate (ME-2,4cPP) into 1-hydroxy-2-methyl-2-(E)-butenyl 4-diphosphate. The polypeptide is 4-hydroxy-3-methylbut-2-en-1-yl diphosphate synthase (flavodoxin) (Chlamydia felis (strain Fe/C-56) (Chlamydophila felis)).